Here is a 105-residue protein sequence, read N- to C-terminus: U2-lycotoxin-Ls1a (105 aa).

The signal sequence occupies residues 1 to 17; it reads MIKYVLISALLVVAVYS. Positions 18-41 are excised as a propeptide; the sequence is FTIEDNEDALLEEAEDELDTEEER. 4 cysteine pairs are disulfide-bonded: Cys51–Cys67, Cys58–Cys97, Cys60–Cys83, and Cys69–Cys81.

It belongs to the neurotoxin 04 (omega-agtx) family. 01 (type I omega-agtx) subfamily. In terms of tissue distribution, expressed by the venom gland.

The protein localises to the secreted. Insecticidal to house crickets. It induces an excitatory slow-onset impact that leads to irreversible spastic paralysis. It also modifies human voltage-gated potassium channel Kv1.5/KCNA5. Most likely, it binds to the voltage-sensing domain of the channel, suggesting it does not block the pore but prevents its opening at physiological membrane potentials. The recombinant peptide binds to the channel in an irreversible manner and slows down the hKv1.5 current activation kinetics. It is not toxic to mice, when intracranially injected (at 0.5 ug/g mouse). The polypeptide is U2-lycotoxin-Ls1a (Lycosa singoriensis (Wolf spider)).